A 361-amino-acid chain; its full sequence is Cytochrome c peroxidase, mitochondrial (361 aa).

A mitochondrion-targeting transit peptide spans 1 to 41 (MASAARSASRAFLRSSLRPAVRSSRFALPTQGLRVASRRGY). H122 functions as the Proton acceptor in the catalytic mechanism. H245 provides a ligand contact to heme b. The active-site Tryptophan radical intermediate is the W261.

It belongs to the peroxidase family. Cytochrome c peroxidase subfamily. Forms a one-to-one complex with cytochrome c. Requires heme b as cofactor.

It localises to the mitochondrion matrix. Its subcellular location is the mitochondrion intermembrane space. It carries out the reaction 2 Fe(II)-[cytochrome c] + H2O2 + 2 H(+) = 2 Fe(III)-[cytochrome c] + 2 H2O. Destroys radicals which are normally produced within the cells and which are toxic to biological systems. This chain is Cytochrome c peroxidase, mitochondrial (ccp1), found in Emericella nidulans (strain FGSC A4 / ATCC 38163 / CBS 112.46 / NRRL 194 / M139) (Aspergillus nidulans).